The chain runs to 321 residues: MRFFVLGAGSWGTVFAQILHENGEEVVLWARRKEIVDLINVSHTSPYVEESKITVRATNDLEEIKKEDILVIAIPVQYIREHLLRLPVKPSMVLNLSKGIEIKTGKRVSEIVEEILGCPYAVLSGPSHAEEVAKKLPTAVTLAGENSKELQKRISTEYFRVYTCEDVVGVEIAGALKNVIAIAAGILDGFGGWDNAKAALETRGIYEIARFGMFFGADQKTFMGLAGIGDLMVTCNSRYSRNRRFGELIARGFNPLKLLESSNQVVEGAFTVKAVMKIAKENKIDMPISEEVYRVVYEGKPPLQSMRDLMRRSLKDEFWAS.

NADPH-binding residues include S10, W11, R31, R32, Y47, and K98. Residues K98, G125, and S127 each coordinate sn-glycerol 3-phosphate. A129 provides a ligand contact to NADPH. K177, D230, S240, R241, and N242 together coordinate sn-glycerol 3-phosphate. The active-site Proton acceptor is the K177. R241 lines the NADPH pocket. NADPH is bound by residues V265 and E267.

The protein belongs to the NAD-dependent glycerol-3-phosphate dehydrogenase family.

It localises to the cytoplasm. It catalyses the reaction sn-glycerol 3-phosphate + NAD(+) = dihydroxyacetone phosphate + NADH + H(+). The catalysed reaction is sn-glycerol 3-phosphate + NADP(+) = dihydroxyacetone phosphate + NADPH + H(+). It participates in membrane lipid metabolism; glycerophospholipid metabolism. Its function is as follows. Catalyzes the reduction of the glycolytic intermediate dihydroxyacetone phosphate (DHAP) to sn-glycerol 3-phosphate (G3P), the key precursor for phospholipid synthesis. The sequence is that of Glycerol-3-phosphate dehydrogenase [NAD(P)+] from Thermotoga sp. (strain RQ2).